Reading from the N-terminus, the 352-residue chain is Chymopapain (352 aa).

The signal sequence occupies residues 1 to 18 (MATMSSISKIIFLATCLI). A propeptide spans 19–134 (IHMGLSSADF…EDFTYKHVTN (116 aa)) (activation peptide). N86 carries an N-linked (GlcNAc...) asparagine glycan. 3 cysteine pairs are disulfide-bonded: C156–C197, C190–C229, and C287–C338. The active site involves C159. Catalysis depends on residues H293 and N313.

This sequence belongs to the peptidase C1 family.

The catalysed reaction is Specificity similar to that of papain.. Functionally, cysteine proteinase with a high level of diversity in substrate specificity. In Carica papaya (Papaya), this protein is Chymopapain.